A 181-amino-acid polypeptide reads, in one-letter code: uncharacterized protein (181 aa).

2 stretches are compositionally biased toward gly residues: residues 143–156 and 170–181; these read RRGG…GPRG and GPFGPGYRGPRF. The tract at residues 143-181 is disordered; sequence RRGGRYGDFGGPRGPRGPRNDGPFGPFGPFGPGYRGPRF.

As to quaternary structure, has been detected in a cytochrome bc1-aa3 supercomplex; its deletion however leaves complex activity unaffected.

This is an uncharacterized protein from Corynebacterium glutamicum (strain ATCC 13032 / DSM 20300 / JCM 1318 / BCRC 11384 / CCUG 27702 / LMG 3730 / NBRC 12168 / NCIMB 10025 / NRRL B-2784 / 534).